Reading from the N-terminus, the 315-residue chain is 4-hydroxy-3-methylbut-2-enyl diphosphate reductase (315 aa).

Cys-12 contacts [4Fe-4S] cluster. His-41 and His-74 together coordinate (2E)-4-hydroxy-3-methylbut-2-enyl diphosphate. Dimethylallyl diphosphate-binding residues include His-41 and His-74. 2 residues coordinate isopentenyl diphosphate: His-41 and His-74. Cys-96 is a [4Fe-4S] cluster binding site. His-124 contacts (2E)-4-hydroxy-3-methylbut-2-enyl diphosphate. Dimethylallyl diphosphate is bound at residue His-124. Position 124 (His-124) interacts with isopentenyl diphosphate. Residue Glu-126 is the Proton donor of the active site. Thr-167 contacts (2E)-4-hydroxy-3-methylbut-2-enyl diphosphate. Cys-197 contacts [4Fe-4S] cluster. Positions 225, 226, 227, and 269 each coordinate (2E)-4-hydroxy-3-methylbut-2-enyl diphosphate. Residues Ser-225, Ser-226, Asn-227, and Ser-269 each coordinate dimethylallyl diphosphate. The isopentenyl diphosphate site is built by Ser-225, Ser-226, Asn-227, and Ser-269.

It belongs to the IspH family. As to quaternary structure, homodimer. It depends on [4Fe-4S] cluster as a cofactor.

The enzyme catalyses isopentenyl diphosphate + 2 oxidized [2Fe-2S]-[ferredoxin] + H2O = (2E)-4-hydroxy-3-methylbut-2-enyl diphosphate + 2 reduced [2Fe-2S]-[ferredoxin] + 2 H(+). It carries out the reaction dimethylallyl diphosphate + 2 oxidized [2Fe-2S]-[ferredoxin] + H2O = (2E)-4-hydroxy-3-methylbut-2-enyl diphosphate + 2 reduced [2Fe-2S]-[ferredoxin] + 2 H(+). It functions in the pathway isoprenoid biosynthesis; dimethylallyl diphosphate biosynthesis; dimethylallyl diphosphate from (2E)-4-hydroxy-3-methylbutenyl diphosphate: step 1/1. It participates in isoprenoid biosynthesis; isopentenyl diphosphate biosynthesis via DXP pathway; isopentenyl diphosphate from 1-deoxy-D-xylulose 5-phosphate: step 6/6. In terms of biological role, catalyzes the conversion of 1-hydroxy-2-methyl-2-(E)-butenyl 4-diphosphate (HMBPP) into a mixture of isopentenyl diphosphate (IPP) and dimethylallyl diphosphate (DMAPP). Acts in the terminal step of the DOXP/MEP pathway for isoprenoid precursor biosynthesis. In Wigglesworthia glossinidia brevipalpis, this protein is 4-hydroxy-3-methylbut-2-enyl diphosphate reductase.